The chain runs to 304 residues: Nod factor export ATP-binding protein I (304 aa).

Positions 6–236 (IDFQQVEKRY…EIGCDVIEIY (231 aa)) constitute an ABC transporter domain. Residue 38–45 (GPNGAGKT) participates in ATP binding.

Belongs to the ABC transporter superfamily. Lipooligosaccharide exporter (TC 3.A.1.102) family. In terms of assembly, the complex is composed of two ATP-binding proteins (NodI) and two transmembrane proteins (NodJ).

It localises to the cell inner membrane. Part of the ABC transporter complex NodIJ involved in the export of the nodulation factors (Nod factors), the bacterial signal molecules that induce symbiosis and subsequent nodulation induction. Nod factors are LCO (lipo-chitin oligosaccharide), a modified beta-1,4-linked N-acetylglucosamine oligosaccharide. This subunit is responsible for energy coupling to the transport system. The sequence is that of Nod factor export ATP-binding protein I from Burkholderia pseudomallei (strain 1710b).